The following is a 512-amino-acid chain: Norfluorocurarine oxidase (512 aa).

Residues 3 to 23 form a helical membrane-spanning segment; the sequence is LLLNPSLFSLLPLLLFIIFLF. Cys-453 is a heme binding site.

The protein belongs to the cytochrome P450 family. The cofactor is heme.

It is found in the membrane. It catalyses the reaction norfluorocurarine + reduced [NADPH--hemoprotein reductase] + O2 = 18-hydroxynorfluorocurarine + oxidized [NADPH--hemoprotein reductase] + H2O + H(+). It functions in the pathway alkaloid biosynthesis. In terms of biological role, monooxygenase involved in the biosynthesis of curare monoterpene indole alkaloids (MIAs), natural products such as diaboline, a pharmacologically active compound used to regulate blood pressure. Curare alkaloids act as animal glycine receptor antagonists. Catalyzes the conversion of norfluorocurarine to 18-OH norfluorocurarine. The polypeptide is Norfluorocurarine oxidase (Strychnos sp).